Here is a 286-residue protein sequence, read N- to C-terminus: Haloalkane dehalogenase 2 (286 aa).

The AB hydrolase-1 domain maps to proline 35 to threonine 134. The Nucleophile role is filled by aspartate 109. Catalysis depends on aspartate 238, which acts as the Proton donor. The active-site Proton acceptor is histidine 267.

It belongs to the haloalkane dehalogenase family. Type 1 subfamily. Monomer.

It catalyses the reaction 1-haloalkane + H2O = a halide anion + a primary alcohol + H(+). Its function is as follows. Catalyzes hydrolytic cleavage of carbon-halogen bonds in halogenated aliphatic compounds, leading to the formation of the corresponding primary alcohols, halide ions and protons. In Mycobacterium bovis (strain ATCC BAA-935 / AF2122/97), this protein is Haloalkane dehalogenase 2 (dhmA2).